Here is a 319-residue protein sequence, read N- to C-terminus: MATTKPYRVLLYYMYTTIENPEEFAAEHLAFCNSLELKGRILVAKEGINGTCSGTVEQTEKYMEAMNNDPRFDGIVFKIDEADGHAFKKMHVRPRPELVTLRLEDDINPHEITGKYLEPKDFYEAMKQEDTVIIDARNDYEFDLGHFKGAIKPDIESFRELPDWIRENKEVLEGKKILTYCTGGIRCEKFSGWLVREGYEDVSQLHGGIVTYGKDPEVQGELWDGQCYVFDERIAVPVNQKEHVIVGKDYFTGEPCERYVNCANPECNKKILCSEENEAKYLRACSHECRVSPRNRYVIQHELTEEQVAAALEKIEAGK.

The 95-residue stretch at 127–221 folds into the Rhodanese domain; that stretch reads KQEDTVIIDA…YGKDPEVQGE (95 aa). Cys-181 (cysteine persulfide intermediate) is an active-site residue.

Belongs to the TrhO family.

The enzyme catalyses uridine(34) in tRNA + AH2 + O2 = 5-hydroxyuridine(34) in tRNA + A + H2O. Catalyzes oxygen-dependent 5-hydroxyuridine (ho5U) modification at position 34 in tRNAs. The protein is tRNA uridine(34) hydroxylase of Bacillus cereus (strain ATCC 10987 / NRS 248).